A 376-amino-acid polypeptide reads, in one-letter code: UDP-N-acetylglucosamine 2-epimerase (376 aa).

Residues Arg-10, Lys-15, Asp-95, Glu-117, His-213, Gln-271, Phe-276, 290 to 292 (SGG), Glu-296, and Arg-313 contribute to the substrate site.

The protein belongs to the UDP-N-acetylglucosamine 2-epimerase family. In terms of assembly, homodimer.

The protein resides in the cytoplasm. It catalyses the reaction UDP-N-acetyl-alpha-D-glucosamine = UDP-N-acetyl-alpha-D-mannosamine. It functions in the pathway bacterial outer membrane biogenesis; enterobacterial common antigen biosynthesis. Catalyzes the reversible epimerization at C-2 of UDP-N-acetylglucosamine (UDP-GlcNAc) and thereby provides bacteria with UDP-N-acetylmannosamine (UDP-ManNAc), the activated donor of ManNAc residues. This Escherichia coli O157:H7 protein is UDP-N-acetylglucosamine 2-epimerase.